Reading from the N-terminus, the 90-residue chain is Major mite allergen Der p 23 (90 aa).

The signal sequence occupies residues 1–21; that stretch reads MKFNIIIVFISLAILVHSSYA. The interval 22–42 is disordered; it reads ANDNDDDPTTTVHPTTTEQPD. The segment covering 30-39 has biased composition (low complexity); that stretch reads TTTVHPTTTE. Residues 44-90 form the Chitin-binding type-2 domain; it reads KFECPSRFGYFADPKDPHKFYICSNWEAVHKDCPGNTRWNEDEETCT. 2 disulfides stabilise this stretch: Cys-47–Cys-66 and Cys-76–Cys-89. The tract at residues 52–90 is important for IgE-binding; the sequence is GYFADPKDPHKFYICSNWEAVHKDCPGNTRWNEDEETCT.

Monomer. Expressed in epithelial cells of the midgut.

It localises to the secreted. The protein resides in the endoplasmic reticulum. It is found in the cytoplasmic vesicle. In terms of biological role, does not bind chitin in vitro. The protein is Major mite allergen Der p 23 of Dermatophagoides pteronyssinus (European house dust mite).